A 122-amino-acid chain; its full sequence is Small ribosomal subunit protein uS13 (122 aa).

The segment at 97–122 (PVRGQRTHTNARTRKGPARAIAGKKK) is disordered.

The protein belongs to the universal ribosomal protein uS13 family. As to quaternary structure, part of the 30S ribosomal subunit. Forms a loose heterodimer with protein S19. Forms two bridges to the 50S subunit in the 70S ribosome.

Functionally, located at the top of the head of the 30S subunit, it contacts several helices of the 16S rRNA. In the 70S ribosome it contacts the 23S rRNA (bridge B1a) and protein L5 of the 50S subunit (bridge B1b), connecting the 2 subunits; these bridges are implicated in subunit movement. Contacts the tRNAs in the A and P-sites. The chain is Small ribosomal subunit protein uS13 from Bartonella bacilliformis (strain ATCC 35685 / KC583 / Herrer 020/F12,63).